The following is an 805-amino-acid chain: MESVEKEDSLTAPFEFATTASTDAANAPTTFPVEAPPLEEEEVIIEQDPGFVSEDDEDRSVPTEDKKQDQDDAEANEEQVGRGDQRHGDYLDVGDDVLLKHLQRQCAIICDALQERSDVPLAIADVSLAYERHLFSPRVPPKRQENGTCEPNPRLNFYPVFAVPEVLATYHIFFQNCKIPLSCRANRSRADKQLALRQGAVIPDIASLDEVPKIFEGLGRDEKRAANALQQENSENESHCGVLVELEGDNARLAVLKRSIEVTHFAYPALNLPPKVMSTVMSELIVRRARPLERDANLQEQTEEGLPAVGDEQLARWLETREPADLEERRKLMMAAVLVTVELECMQRFFADPEMQRKLEETLHYTFRQGYVRQACKISNVELCNLVSYLGILHENRLGQNVLHSTLKGEARRDYVRDCVYLFLCYTWQTAMGVWQQCLEERNLKELQKLLKQNLKDLWTAFNERSVAAHLADIIFPERLLKTLQQGLPDFTSQSMLQNFRNFILERSGILPATCCALPSDFVPIKYRECPPPLWGHCYLLQLANYLAYHSDIMEDVSGDGLLECHCRCNLCTPHRSLVCNSQLLSESQIIGTFELQGPSPDEKSAAPGLKLTPGLWTSAYLRKFVPEDYHAHEIRFYEDQSRPPNAELTACVITQGHILGQLQAINKARQEFLLRKGRGVYLDPQSGEELNPIPPPPQPYQQPRALASQDGTQKEAAAAAAATHGRGGILGQSGRGGFGRGGGDDGRLGQPRRSFRGRRGVRRNTVTLGRIPLAGAPEIGNRSQHRYNLRSSGAAGTACSPTQP.

Residues 1 to 88 (MESVEKEDSL…QVGRGDQRHG (88 aa)) form a disordered region. The span at 18–29 (TTASTDAANAPT) shows a compositional bias: polar residues. Composition is skewed to basic and acidic residues over residues 59 to 70 (RSVPTEDKKQDQ) and 79 to 88 (QVGRGDQRHG). Residues 280–345 (VMSELIVRRA…AVLVTVELEC (66 aa)) are binding to host EIF4G. Residues 348 to 466 (RFFADPEMQR…DLWTAFNERS (119 aa)) enclose the RRM domain. 2 positions are modified to phosphotyrosine; by host: Tyr365 and Tyr682. The tract at residues 684–805 (DPQSGEELNP…AGTACSPTQP (122 aa)) is disordered. Residues 726 to 742 (GRGGILGQSGRGGFGRG) are compositionally biased toward gly residues. A compositionally biased stretch (basic residues) spans 754 to 763 (RSFRGRRGVR).

It belongs to the adenoviridae shutoff protein family. As to quaternary structure, monomer. Interacts with hexon protein; this interaction allows chaperoning and trimerization of hexon proteins. Interacts (via N-terminus) with host initiation factor EIF4G (via C-terminus). Interacts (via RRM domain) with viral mRNAs that contain the tripartite leader; this interaction allows ribosome shunting and expression of viral late mRNAs. Might be cleaved by the viral protease. In terms of processing, phosphorylated. Tyrosine phosphorylation enhances preferential binding to tripartite leader mRNAs and allows ribosome shunting. Post-translationally, methylated. Asymmetric dimethylation by host PRMT1 of the Arg/Gly-rich region may regulate shutoff protein binding to hexon and promote the capsid assembly in the nucleus.

The protein localises to the host cytoplasm. Protein that inhibits host translation while promoting late viral translation by ribosome shunting. Blocks host cap-dependent translation by binding to eIF4G, displacing MKNK1 from cap initiation complexes and preventing EIF4E phosphorylation. Binds to the tripartite leader sequence of viral late mRNAs and recruits host eIF4G, PABPC1/poly-A binding protein and 40S ribosomes subunits on viral mRNAs, allowing ribosome shunting and efficient translation of late viral mRNAs even though conventional translation via ribosome scanning from the cap has been shut off in the host cell. During assembly, acts as a chaperone protein that helps hexon proteins assembly into trimers. The sequence is that of Shutoff protein from Homo sapiens (Human).